The chain runs to 201 residues: Small ribosomal subunit protein uS4c (201 aa).

The disordered stretch occupies residues 13–43; the sequence is RRLGDLPGLSRKAIKRPYPPGEHGQKPRKPS. Residues 90 to 154 form the S4 RNA-binding domain; sequence MRLDNTIFRL…SKQLVESYLA (65 aa).

It belongs to the universal ribosomal protein uS4 family. In terms of assembly, part of the 30S ribosomal subunit. Contacts protein S5. The interaction surface between S4 and S5 is involved in control of translational fidelity.

Its subcellular location is the plastid. The protein localises to the chloroplast. One of the primary rRNA binding proteins, it binds directly to 16S rRNA where it nucleates assembly of the body of the 30S subunit. Its function is as follows. With S5 and S12 plays an important role in translational accuracy. The polypeptide is Small ribosomal subunit protein uS4c (rps4) (Porphyra purpurea (Red seaweed)).